The chain runs to 302 residues: MTTNLIWILYRSDSDTAYKETLNCKKIIEGYGKKVLFSEISNETNNINQLFLKSEVLPEITIVLGGDGTVLRAARYLSPKNIPILSFNVGGNLGFLTHDRQILKQETFWERVSNNRFNIQKRMMLEATVFREKNNNENTIKKSFFALNDFYLRSCTDEIAPTCSLALEIDGEAVDRYKGDGLIFSTPTGSTAYSMAAGGPIIHPSLDAIIVSAICPMSLASRPIVVPPESQLVIKPIRGMKQKIKLWLDGSSGCLIEAEDTCLIKKSNHSTSIIILDENHSYYKTITQKLHWASSLNNPNKQ.

The active-site Proton acceptor is the Asp67. Residues 67-68 (DG), Arg72, 148-149 (ND), Lys178, and Asp180 contribute to the NAD(+) site.

It belongs to the NAD kinase family. It depends on a divalent metal cation as a cofactor.

It localises to the cytoplasm. The catalysed reaction is NAD(+) + ATP = ADP + NADP(+) + H(+). Functionally, involved in the regulation of the intracellular balance of NAD and NADP, and is a key enzyme in the biosynthesis of NADP. Catalyzes specifically the phosphorylation on 2'-hydroxyl of the adenosine moiety of NAD to yield NADP. This chain is NAD kinase 1, found in Prochlorococcus marinus (strain NATL2A).